The following is an 87-amino-acid chain: MAGTSLGARFYRQIKRHPGLIPMIGFIGLGMGSAALYLLRLALRSPDVCWDRKNNPEPWNRLSPNDQYKFLAVSTDYKKLKKDRPDF.

The protein belongs to the complex I NDUFA4 subunit family.

The chain is NADH dehydrogenase [ubiquinone] 1 alpha subcomplex subunit 4-like 2 (NDUFA4L2) from Bos taurus (Bovine).